A 227-amino-acid polypeptide reads, in one-letter code: Triggering receptor expressed on myeloid cells 2 (227 aa).

Positions 1 to 18 (MGPLHQFLLLLITALSQA) are cleaved as a signal peptide. Topologically, residues 19-171 (LNTTVLQGMA…NQETSFPPTS (153 aa)) are extracellular. A glycan (N-linked (GlcNAc...) asparagine) is linked at asparagine 20. In terms of domain architecture, Ig-like V-type spans 29–112 (GQSLRVSCTY…GDAGLYQCQS (84 aa)). 2 cysteine pairs are disulfide-bonded: cysteine 36/cysteine 110 and cysteine 51/cysteine 60. A 1,2-diacyl-sn-glycero-3-phospho-L-serine is bound at residue histidine 67. An N-linked (GlcNAc...) asparagine glycan is attached at asparagine 79. Threonine 88 provides a ligand contact to a 1,2-diacyl-sn-glycero-3-phospho-L-serine. A helical membrane pass occupies residues 172–192 (ILLLLACVLLSKFLAASILWA). Over 193 to 227 (VARGRQKPGTPVVRGLDCGQDAGHQLQILTGPGGT) the chain is Cytoplasmic.

In terms of assembly, monomer. After ectodomain shedding, the extracellular domain oligomerizes, which is enhanced and stabilized by binding of phosphatidylserine. Interacts with TYROBP/DAP12. Interaction with TYROBP is required for stabilization of the TREM2 C-terminal fragment (TREM2-CTF) which is produced by proteolytic processing. Interacts with PLXNA1 (via TIG domains); the interaction mediates SEMA6D binding and signaling through TYROBP. In terms of processing, undergoes ectodomain shedding through proteolytic cleavage by ADAM10 and ADAM17 to produce a transmembrane segment, the TREM2 C-terminal fragment (TREM2-CTF), which is subsequently cleaved by gamma-secretase. Expressed in the brain, specifically in microglia (at protein level). Expressed in macrophages (at protein level). Expressed at higher levels in the CNS, heart and lung than in lymph nodes or in other non-lymphoid tissues such as kidney, liver and testis. In the CNS not all microglia express TREM2. Brain regions with an incomplete blood-brain barrier had the lowest percentages of TREM2 expressing microglia, whereas the lateral entorhinal and cingulate cortex had the highest percentages.

Its subcellular location is the cell membrane. It is found in the secreted. In terms of biological role, forms a receptor signaling complex with TYROBP which mediates signaling and cell activation following ligand binding. Acts as a receptor for amyloid-beta protein 42, a cleavage product of the amyloid-beta precursor protein APP, and mediates its uptake and degradation by microglia. Binding to amyloid-beta 42 mediates microglial activation, proliferation, migration, apoptosis and expression of pro-inflammatory cytokines, such as IL6R and CCL3, and the anti-inflammatory cytokine ARG1. Acts as a receptor for lipoprotein particles such as LDL, VLDL, and HDL and for apolipoproteins such as APOA1, APOA2, APOB, APOE, APOE2, APOE3, APOE4, and CLU and enhances their uptake in microglia. Binds phospholipids (preferably anionic lipids) such as phosphatidylserine, phosphatidylethanolamine, phosphatidylglycerol and sphingomyelin. Regulates microglial proliferation by acting as an upstream regulator of the Wnt/beta-catenin signaling cascade. Required for microglial phagocytosis of apoptotic neurons. Also required for microglial activation and phagocytosis of myelin debris after neuronal injury and of neuronal synapses during synapse elimination in the developing brain. Regulates microglial chemotaxis and process outgrowth, and also the microglial response to oxidative stress and lipopolysaccharide. It suppresses PI3K and NF-kappa-B signaling in response to lipopolysaccharide; thus promoting phagocytosis, suppressing pro-inflammatory cytokine and nitric oxide production, inhibiting apoptosis and increasing expression of IL10 and TGFB. During oxidative stress, it promotes anti-apoptotic NF-kappa-B signaling and ERK signaling. Plays a role in microglial MTOR activation and metabolism. Regulates age-related changes in microglial numbers. Triggers activation of the immune responses in macrophages and dendritic cells. Mediates cytokine-induced formation of multinucleated giant cells which are formed by the fusion of macrophages. In dendritic cells, receptor of SEMA6D with PLEXNA1 as coreceptor and mediates up-regulation of chemokine receptor CCR7 and dendritic cell maturation and survival. Involved in the positive regulation of osteoclast differentiation. This Mus musculus (Mouse) protein is Triggering receptor expressed on myeloid cells 2 (Trem2).